A 206-amino-acid chain; its full sequence is Peptidyl-tRNA hydrolase (206 aa).

Tyr-14 is a tRNA binding site. His-19 (proton acceptor) is an active-site residue. TRNA-binding residues include Phe-64 and Asn-66. Residues 185–206 (VNGEAPKKSKDQAKEPANEQPR) are disordered. The span at 189–206 (APKKSKDQAKEPANEQPR) shows a compositional bias: basic and acidic residues.

This sequence belongs to the PTH family. As to quaternary structure, monomer.

The protein localises to the cytoplasm. The enzyme catalyses an N-acyl-L-alpha-aminoacyl-tRNA + H2O = an N-acyl-L-amino acid + a tRNA + H(+). Functionally, hydrolyzes ribosome-free peptidyl-tRNAs (with 1 or more amino acids incorporated), which drop off the ribosome during protein synthesis, or as a result of ribosome stalling. In terms of biological role, catalyzes the release of premature peptidyl moieties from peptidyl-tRNA molecules trapped in stalled 50S ribosomal subunits, and thus maintains levels of free tRNAs and 50S ribosomes. The chain is Peptidyl-tRNA hydrolase from Herpetosiphon aurantiacus (strain ATCC 23779 / DSM 785 / 114-95).